A 188-amino-acid polypeptide reads, in one-letter code: UPF0340 protein SSU98_0310 (188 aa).

This sequence belongs to the UPF0340 family.

This is UPF0340 protein SSU98_0310 from Streptococcus suis (strain 98HAH33).